Here is a 249-residue protein sequence, read N- to C-terminus: Probable transcriptional regulatory protein GOX1679 (249 aa).

It belongs to the TACO1 family.

It localises to the cytoplasm. The protein is Probable transcriptional regulatory protein GOX1679 of Gluconobacter oxydans (strain 621H) (Gluconobacter suboxydans).